A 657-amino-acid polypeptide reads, in one-letter code: tRNA 5-methylaminomethyl-2-thiouridine biosynthesis bifunctional protein MnmC (657 aa).

Positions 1–239 are tRNA (mnm(5)s(2)U34)-methyltransferase; sequence MTDRIVPATL…KRAMLVGEFA (239 aa). The tract at residues 263 to 657 is FAD-dependent cmnm(5)s(2)U34 oxidoreductase; the sequence is IGAGLAGCAV…VRALRHGRVA (395 aa).

The protein in the N-terminal section; belongs to the methyltransferase superfamily. tRNA (mnm(5)s(2)U34)-methyltransferase family. It in the C-terminal section; belongs to the DAO family. The cofactor is FAD.

It localises to the cytoplasm. It catalyses the reaction 5-aminomethyl-2-thiouridine(34) in tRNA + S-adenosyl-L-methionine = 5-methylaminomethyl-2-thiouridine(34) in tRNA + S-adenosyl-L-homocysteine + H(+). Functionally, catalyzes the last two steps in the biosynthesis of 5-methylaminomethyl-2-thiouridine (mnm(5)s(2)U) at the wobble position (U34) in tRNA. Catalyzes the FAD-dependent demodification of cmnm(5)s(2)U34 to nm(5)s(2)U34, followed by the transfer of a methyl group from S-adenosyl-L-methionine to nm(5)s(2)U34, to form mnm(5)s(2)U34. The chain is tRNA 5-methylaminomethyl-2-thiouridine biosynthesis bifunctional protein MnmC from Burkholderia mallei (strain SAVP1).